Here is a 475-residue protein sequence, read N- to C-terminus: ATP synthase subunit beta, chloroplastic (475 aa).

An ATP-binding site is contributed by 155-162 (GGAGVGKT).

Belongs to the ATPase alpha/beta chains family. F-type ATPases have 2 components, CF(1) - the catalytic core - and CF(0) - the membrane proton channel. CF(1) has five subunits: alpha(3), beta(3), gamma(1), delta(1), epsilon(1). CF(0) has four main subunits: a(1), b(1), b'(1) and c(9-12).

It localises to the plastid. It is found in the chloroplast thylakoid membrane. It carries out the reaction ATP + H2O + 4 H(+)(in) = ADP + phosphate + 5 H(+)(out). Functionally, produces ATP from ADP in the presence of a proton gradient across the membrane. The catalytic sites are hosted primarily by the beta subunits. The sequence is that of ATP synthase subunit beta, chloroplastic from Guillardia theta (Cryptophyte).